The primary structure comprises 138 residues: Putative nickel-responsive regulator (138 aa).

Ni(2+) is bound by residues histidine 78, histidine 89, histidine 91, and cysteine 97.

This sequence belongs to the transcriptional regulatory CopG/NikR family. Ni(2+) serves as cofactor.

Its function is as follows. Transcriptional regulator. In Pyrococcus horikoshii (strain ATCC 700860 / DSM 12428 / JCM 9974 / NBRC 100139 / OT-3), this protein is Putative nickel-responsive regulator.